A 713-amino-acid chain; its full sequence is Polyribonucleotide nucleotidyltransferase (713 aa).

2 residues coordinate Mg(2+): Asp493 and Asp499. In terms of domain architecture, KH spans 560–619 (PRMITIKINPEKIRDVIGKGGSVIRALTEETGTTIDISDDGVVTIASTNSEGMAEAKKRI). The S1 motif domain maps to 629 to 697 (GHVYEGTVLK…EKGRVRLSAK (69 aa)).

This sequence belongs to the polyribonucleotide nucleotidyltransferase family. Mg(2+) serves as cofactor.

The protein resides in the cytoplasm. The catalysed reaction is RNA(n+1) + phosphate = RNA(n) + a ribonucleoside 5'-diphosphate. Functionally, involved in mRNA degradation. Catalyzes the phosphorolysis of single-stranded polyribonucleotides processively in the 3'- to 5'-direction. In Burkholderia mallei (strain NCTC 10247), this protein is Polyribonucleotide nucleotidyltransferase.